Reading from the N-terminus, the 254-residue chain is Proteasome activator complex subunit 3 (254 aa).

Ala2 bears the N-acetylalanine mark. A phosphoserine mark is found at Ser17 and Ser24. Lys195 bears the N6-acetyllysine; by P300/CBP mark. Ser247 bears the Phosphoserine; by CHEK2 mark.

It belongs to the PA28 family. Homoheptamer; the stability of the heptamer is essential for the specific activation of the trypsine-like subunit and inhibition of the chymotrypsin-like and postglutamyl-preferring (PGPH) subunits of the proteasome. Interacts with p53/TP53 and MDM2. Interacts with MAP3K3. Associates with the proteasome. Interacts with CCAR2. Interacts with PSME3IP1 (via C-terminus); the interaction is direct and promotes the association of PSME3 with the 20S proteasome. Interacts with COIL; the interaction is inhibited by PSME3IP1. As to quaternary structure, (Microbial infection) Interacts with human cytomegalovirus UL27. Post-translationally, phosphorylated by MAP3K3. Phosphorylation at Ser-247 promotes its association with CCAR2. In terms of processing, acetylation at the major site Lys-195 is important for oligomerization and ability to degrade its target substrates. Deacetylated by SIRT1.

It is found in the nucleus. Its subcellular location is the cytoplasm. Subunit of the 11S REG-gamma (also called PA28-gamma) proteasome regulator, a doughnut-shaped homoheptamer which associates with the proteasome. 11S REG-gamma activates the trypsin-like catalytic subunit of the proteasome but inhibits the chymotrypsin-like and postglutamyl-preferring (PGPH) subunits. Facilitates the MDM2-p53/TP53 interaction which promotes ubiquitination- and MDM2-dependent proteasomal degradation of p53/TP53, limiting its accumulation and resulting in inhibited apoptosis after DNA damage. May also be involved in cell cycle regulation. Mediates CCAR2 and CHEK2-dependent SIRT1 inhibition. The protein is Proteasome activator complex subunit 3 (PSME3) of Homo sapiens (Human).